A 428-amino-acid polypeptide reads, in one-letter code: 3-phosphoshikimate 1-carboxyvinyltransferase (428 aa).

Lys22, Ser23, and Arg27 together coordinate 3-phosphoshikimate. Residue Lys22 coordinates phosphoenolpyruvate. 2 residues coordinate phosphoenolpyruvate: Gly96 and Arg124. Positions 170, 171, 172, 198, 314, 337, and 341 each coordinate 3-phosphoshikimate. A phosphoenolpyruvate-binding site is contributed by Gln172. Catalysis depends on Asp314, which acts as the Proton acceptor. 3 residues coordinate phosphoenolpyruvate: Arg345, Arg387, and Lys412.

Belongs to the EPSP synthase family. Monomer.

It is found in the cytoplasm. It carries out the reaction 3-phosphoshikimate + phosphoenolpyruvate = 5-O-(1-carboxyvinyl)-3-phosphoshikimate + phosphate. Its pathway is metabolic intermediate biosynthesis; chorismate biosynthesis; chorismate from D-erythrose 4-phosphate and phosphoenolpyruvate: step 6/7. Catalyzes the transfer of the enolpyruvyl moiety of phosphoenolpyruvate (PEP) to the 5-hydroxyl of shikimate-3-phosphate (S3P) to produce enolpyruvyl shikimate-3-phosphate and inorganic phosphate. This is 3-phosphoshikimate 1-carboxyvinyltransferase from Photobacterium profundum (strain SS9).